The chain runs to 76 residues: Anaredoxin (76 aa).

Residues 24–66 (CMVCWEVNSKANGHHLIPYSEGGSADIQNMMTLCPSCHTKYHK) form the HNH domain.

The protein belongs to the HNH nuclease family.

Its function is as follows. Putative P-450 reductase. This is Anaredoxin from Nostoc sp. (strain PCC 7120 / SAG 25.82 / UTEX 2576).